The sequence spans 124 residues: Putative RNA polymerase II transcriptional coactivator (124 aa).

Residues 1 to 61 (MSSSSSSEDE…GRLKDSDGNE (61 aa)) are disordered. Basic and acidic residues-rich tracts occupy residues 11-21 (LEKKVTKEQKK) and 39-58 (QEVK…KDSD).

The protein belongs to the transcriptional coactivator PC4 family.

The protein resides in the nucleus. In terms of biological role, general coactivator that functions cooperatively with TAFs and mediates functional interactions between upstream activators and the general transcriptional machinery. Binds single-stranded DNA. The chain is Putative RNA polymerase II transcriptional coactivator from Caenorhabditis elegans.